We begin with the raw amino-acid sequence, 570 residues long: Probable metalloreductase AIM14 (570 aa).

Helical transmembrane passes span 21–41, 70–90, 101–118, 142–162, 177–197, 204–224, and 230–250; these read IKYG…LALL, AIHL…HYSL, LGRL…LTLR, IITV…AIDD, FVGF…IGPM, LFYI…PIHS, and FPFL…RIVF. Residues 101–219 enclose the Ferric oxidoreductase domain; the sequence is LGRLSYALIP…NLVNVAFILL (119 aa). An FAD-binding FR-type domain is found at 250–388; sequence FAKSLMILNK…GGSGISFALP (139 aa). The disordered stretch occupies residues 480-507; sequence ISNFNSENADSNDKTPETSHSPTKENGS.

This sequence belongs to the ferric reductase (FRE) family. AIM14 subfamily. Interacts with ribosomes.

It is found in the membrane. In terms of biological role, probable cell surface metalloreductase. May be involved in iron or copper homeostasis. This is Probable metalloreductase AIM14 (AIM14) from Saccharomyces cerevisiae (strain JAY291) (Baker's yeast).